Here is a 693-residue protein sequence, read N- to C-terminus: Elongation factor G (693 aa).

The region spanning 8-282 (EKTRNIGIMA…AVIDYLPSPL (275 aa)) is the tr-type G domain. Residues 17-24 (AHIDAGKT), 81-85 (DTPGH), and 135-138 (NKMD) contribute to the GTP site.

The protein belongs to the TRAFAC class translation factor GTPase superfamily. Classic translation factor GTPase family. EF-G/EF-2 subfamily.

The protein localises to the cytoplasm. In terms of biological role, catalyzes the GTP-dependent ribosomal translocation step during translation elongation. During this step, the ribosome changes from the pre-translocational (PRE) to the post-translocational (POST) state as the newly formed A-site-bound peptidyl-tRNA and P-site-bound deacylated tRNA move to the P and E sites, respectively. Catalyzes the coordinated movement of the two tRNA molecules, the mRNA and conformational changes in the ribosome. This is Elongation factor G from Staphylococcus carnosus (strain TM300).